Consider the following 110-residue polypeptide: Phosphoribosyl-AMP cyclohydrolase (110 aa).

A Mg(2+)-binding site is contributed by Asp-80. Cys-81 is a binding site for Zn(2+). Residues Asp-82 and Asp-84 each coordinate Mg(2+). Cys-97 and Cys-104 together coordinate Zn(2+).

Belongs to the PRA-CH family. In terms of assembly, homodimer. It depends on Mg(2+) as a cofactor. Zn(2+) serves as cofactor.

Its subcellular location is the cytoplasm. It carries out the reaction 1-(5-phospho-beta-D-ribosyl)-5'-AMP + H2O = 1-(5-phospho-beta-D-ribosyl)-5-[(5-phospho-beta-D-ribosylamino)methylideneamino]imidazole-4-carboxamide. The protein operates within amino-acid biosynthesis; L-histidine biosynthesis; L-histidine from 5-phospho-alpha-D-ribose 1-diphosphate: step 3/9. In terms of biological role, catalyzes the hydrolysis of the adenine ring of phosphoribosyl-AMP. The chain is Phosphoribosyl-AMP cyclohydrolase from Clostridium botulinum (strain ATCC 19397 / Type A).